A 157-amino-acid chain; its full sequence is Small ribosomal subunit protein uS7 (157 aa).

It belongs to the universal ribosomal protein uS7 family. Part of the 30S ribosomal subunit. Contacts proteins S9 and S11.

Functionally, one of the primary rRNA binding proteins, it binds directly to 16S rRNA where it nucleates assembly of the head domain of the 30S subunit. Is located at the subunit interface close to the decoding center, probably blocks exit of the E-site tRNA. The protein is Small ribosomal subunit protein uS7 of Psychrobacter cryohalolentis (strain ATCC BAA-1226 / DSM 17306 / VKM B-2378 / K5).